We begin with the raw amino-acid sequence, 803 residues long: PR domain zinc finger protein 4 (803 aa).

An SET domain is found at 408–532 (KQLVLRQSIV…PESELLFYYS (125 aa)). 5 consecutive C2H2-type zinc fingers follow at residues 593-615 (WKCSMCPQAFISPSKLHVHFMGH), 621-643 (HKCDFCSKAFSDPSNLRTHLKIH), 649-671 (YRCTLCDKSFTQKAHLESHMVIH), 677-699 (LKCDYCDKLFMRRQDLKQHVLIH), and 705-727 (IKCPKCDKLFLRTNHLKKHLNSH). A C2H2-type 6; degenerate zinc finger spans residues 733 to 755 (YVCEKCTKAYLTKYHLTRHLKTC). Residues 757-803 (EPSSSSSAQEEEDDESEEEDLADSMRTEDCRMGSAVYSTDESLSAHK) are disordered. Residues 765 to 778 (QEEEDDESEEEDLA) are compositionally biased toward acidic residues. Residues 792-803 (VYSTDESLSAHK) are compositionally biased toward polar residues.

The protein belongs to the class V-like SAM-binding methyltransferase superfamily.

Its subcellular location is the nucleus. In terms of biological role, may function as a transcription factor involved in cell differentiation. In Mus musculus (Mouse), this protein is PR domain zinc finger protein 4 (Prdm4).